The sequence spans 42 residues: Photosystem I reaction center subunit IX (42 aa).

Residues 7 to 27 traverse the membrane as a helical segment; the sequence is YLSTAPVLATLWFGFLAGLLI.

It belongs to the PsaJ family.

The protein localises to the plastid. The protein resides in the chloroplast thylakoid membrane. May help in the organization of the PsaE and PsaF subunits. This chain is Photosystem I reaction center subunit IX, found in Psilotum nudum (Whisk fern).